Consider the following 637-residue polypeptide: 1-deoxy-D-xylulose-5-phosphate synthase (637 aa).

Residues His76 and Ala117–Ser119 each bind thiamine diphosphate. Asp148 lines the Mg(2+) pocket. Thiamine diphosphate contacts are provided by residues Gly149–Ala150, Asn177, Tyr287, and Glu369. Asn177 provides a ligand contact to Mg(2+).

It belongs to the transketolase family. DXPS subfamily. In terms of assembly, homodimer. Mg(2+) serves as cofactor. Requires thiamine diphosphate as cofactor.

The catalysed reaction is D-glyceraldehyde 3-phosphate + pyruvate + H(+) = 1-deoxy-D-xylulose 5-phosphate + CO2. Its pathway is metabolic intermediate biosynthesis; 1-deoxy-D-xylulose 5-phosphate biosynthesis; 1-deoxy-D-xylulose 5-phosphate from D-glyceraldehyde 3-phosphate and pyruvate: step 1/1. In terms of biological role, catalyzes the acyloin condensation reaction between C atoms 2 and 3 of pyruvate and glyceraldehyde 3-phosphate to yield 1-deoxy-D-xylulose-5-phosphate (DXP). The sequence is that of 1-deoxy-D-xylulose-5-phosphate synthase from Pelagibacter ubique (strain HTCC1062).